We begin with the raw amino-acid sequence, 181 residues long: Sodium/potassium-transporting ATPase subunit beta-1-interacting protein 3 (181 aa).

The next 4 helical transmembrane spans lie at 2–22 (GCCT…LSAL), 35–55 (APIL…FGTI), 62–82 (IMVY…IICF), and 152–172 (VQIL…SISM).

Belongs to the NKAIN family. Interacts with ATP1B1. As to expression, detected in the brain only and specifically in neurons. Expressed in multiple regions such as cerebral cortex, thalamus, hippocampus, olfactory bulb and brainstem as well as in cerebellum with low expression in granular cell layer.

It localises to the cell membrane. The protein is Sodium/potassium-transporting ATPase subunit beta-1-interacting protein 3 (Nkain3) of Mus musculus (Mouse).